Reading from the N-terminus, the 403-residue chain is MSSDTSRRDHAAMAVREVLAGDRKVGTVSRSARRRRLELRRLGRTASAVAEDDAAKRVRPASDSSSDSSESAKVAPEPTAEVARWPACVSHGAVSVIGRRREMEDAIFVAAPFLAASKEAAVEGSGVAEEEGKEEDEGFFAVYDGHGGSRVAEACRERMHVVLAEEVRVRRLLQGGGGGADVEDEDRARWKEAMAACFTRVDGEVGGAEEADTGEQTVGSTAVVAVVGPRRIVVANCGDSRAVLSRGGVAVPLSSDHKPDRPDEMERVEAAGGRVINWNGYRILGVLATSRSIGDYYLKPYVIAEPEVTVMDRTDKDEFLILASDGLWDVVSNDVACKIARNCLSGRAASKYPESVSGSTAADAAALLVELAISRGSKDNISVVVVELRRLRSRTTASKENGR.

The interval Leu42 to Ala80 is disordered. Positions Ser62–Ser71 are enriched in low complexity. The PPM-type phosphatase domain occupies Ser90–Leu388. Mn(2+)-binding residues include Asp144, Gly145, Asp325, and Asp379.

This sequence belongs to the PP2C family. It depends on Mg(2+) as a cofactor. Mn(2+) is required as a cofactor.

The enzyme catalyses O-phospho-L-seryl-[protein] + H2O = L-seryl-[protein] + phosphate. It catalyses the reaction O-phospho-L-threonyl-[protein] + H2O = L-threonyl-[protein] + phosphate. The chain is Probable protein phosphatase 2C 8 from Oryza sativa subsp. japonica (Rice).